The following is a 198-amino-acid chain: Dephospho-CoA kinase (198 aa).

Positions 3–198 (LIGLTGGIAS…VDALWAGLRG (196 aa)) constitute a DPCK domain. Position 11–16 (11–16 (ASGKST)) interacts with ATP.

The protein belongs to the CoaE family.

It is found in the cytoplasm. It catalyses the reaction 3'-dephospho-CoA + ATP = ADP + CoA + H(+). The protein operates within cofactor biosynthesis; coenzyme A biosynthesis; CoA from (R)-pantothenate: step 5/5. In terms of biological role, catalyzes the phosphorylation of the 3'-hydroxyl group of dephosphocoenzyme A to form coenzyme A. The protein is Dephospho-CoA kinase of Leifsonia xyli subsp. xyli (strain CTCB07).